The chain runs to 1841 residues: Cell division control protein 12 (1841 aa).

Polar residues-rich tracts occupy residues 1–25 (MRNS…TPSA) and 46–63 (SIES…QSVT). Disordered regions lie at residues 1-63 (MRNS…QSVT), 78-134 (NSHN…GPRL), and 152-181 (PPVH…RTKH). In terms of domain architecture, GBD/FH3 spans 232 to 620 (TRPPSLDQLI…RILLNSKVSN (389 aa)). The stretch at 674–715 (LGAEDLIAKLNKEVEDQKDVILSQKRTNETLKTEIDALQKSH) forms a coiled coil. The FH1 domain maps to 740 to 972 (GSTNSKERII…VSPAVSNNIS (233 aa)). Residues 980-1391 (TGLTRRPTRR…QHRRLNLVNN (412 aa)) enclose the FH2 domain. The stretch at 1260-1290 (TEAAKLNIEAIEQECSELIRGCQNLQIDCDS) forms a coiled coil. Disordered stretches follow at residues 1445–1661 (EAPN…ENNL), 1696–1715 (TTTT…INTI), and 1735–1758 (KSNK…GSNK). Composition is skewed to polar residues over residues 1447–1456 (PNTSTKSSPA) and 1483–1497 (SEST…NITP). Positions 1499-1516 (KKGEVSSKAKKGYNYEKR) are enriched in basic and acidic residues. A compositionally biased stretch (polar residues) spans 1539-1553 (GRSASYTFSDPSSLE). Ser1541 carries the post-translational modification Phosphoserine. Phosphotyrosine is present on Tyr1544. The segment covering 1554–1567 (DSNRQKPFNGEKFR) has biased composition (basic and acidic residues). The segment covering 1568 to 1577 (RFSSKSRRGS) has biased composition (basic residues). Over residues 1594 to 1604 (INNNQTSPQNK) the composition is skewed to polar residues. The segment covering 1605 to 1621 (PSKESLKSDTISNEKKV) has biased composition (basic and acidic residues). Over residues 1630–1641 (NLLTPTISNGTR) the composition is skewed to polar residues.

It belongs to the formin homology family. BNI1 subfamily. As to quaternary structure, interacts with profilin and actin at the FH1 and FH2 domains respectively.

The protein resides in the nucleus. Functionally, plays a role in the cell cycle. Involved in cytokinesis. Component of the cell division ring. In the absence of profilin, caps the barbed end of actin filaments, thus preventing subunit addition and dissociation. In the presence of profilin, nucleates actin filaments that grow rapidly from their barbed ends. The sequence is that of Cell division control protein 12 (cdc12) from Schizosaccharomyces pombe (strain 972 / ATCC 24843) (Fission yeast).